Consider the following 653-residue polypeptide: Modification methylase StsI (653 aa).

The protein belongs to the N(4)/N(6)-methyltransferase family. In terms of assembly, monomer.

The catalysed reaction is a 2'-deoxyadenosine in DNA + S-adenosyl-L-methionine = an N(6)-methyl-2'-deoxyadenosine in DNA + S-adenosyl-L-homocysteine + H(+). An alpha subtype methylase that recognizes the double-stranded sequence 5'-GGATG-3' in one strand and 3'-CATCC-5' in the other, methylates A of both strands, and protects the DNA from cleavage by the StsI endonuclease. The 2 domains of the protein participate in modification of the two strands. This chain is Modification methylase StsI (stsIM), found in Streptococcus sanguinis.